The primary structure comprises 203 residues: Large ribosomal subunit protein uL13 (203 aa).

Ala2 is modified (N-acetylalanine). A Citrulline modification is found at Arg59. Ser77 is modified (phosphoserine). Arg140 bears the Citrulline mark. Lys191 is modified (N6-acetyllysine).

This sequence belongs to the universal ribosomal protein uL13 family. Component of the 60S ribosome. Component of the GAIT complex. Interacts with EIF4G1. Post-translationally, phosphorylation at Ser-77 upon interferon-gamma treatment in macrophages involves a DAPK1-DAPK3 kinase cascade and is causing release from the ribosome, association with the GAIT complex and subsequent involvement in transcript-selective translation inhibition. In terms of processing, citrullinated by PADI4.

It localises to the cytoplasm. Associated with ribosomes but is not required for canonical ribosome function and has extra-ribosomal functions. Component of the GAIT (gamma interferon-activated inhibitor of translation) complex which mediates interferon-gamma-induced transcript-selective translation inhibition in inflammation processes. Upon interferon-gamma activation and subsequent phosphorylation dissociates from the ribosome and assembles into the GAIT complex which binds to stem loop-containing GAIT elements in the 3'-UTR of diverse inflammatory mRNAs (such as ceruplasmin) and suppresses their translation. In the GAIT complex interacts with m7G cap-bound eIF4G at or near the eIF3-binding site and blocks the recruitment of the 43S ribosomal complex. Involved in methylation of rRNA. This chain is Large ribosomal subunit protein uL13 (RPL13A), found in Bos taurus (Bovine).